Reading from the N-terminus, the 221-residue chain is Endonuclease V (221 aa).

Mg(2+)-binding residues include Asp44 and Asp112.

This sequence belongs to the endonuclease V family. Mg(2+) serves as cofactor.

It localises to the cytoplasm. The enzyme catalyses Endonucleolytic cleavage at apurinic or apyrimidinic sites to products with a 5'-phosphate.. In terms of biological role, DNA repair enzyme involved in the repair of deaminated bases. Selectively cleaves double-stranded DNA at the second phosphodiester bond 3' to a deoxyinosine leaving behind the intact lesion on the nicked DNA. In Nostoc punctiforme (strain ATCC 29133 / PCC 73102), this protein is Endonuclease V.